Here is a 390-residue protein sequence, read N- to C-terminus: Pyruvate dehydrogenase E1 component subunit alpha, somatic form, mitochondrial (390 aa).

The transit peptide at 1 to 29 (MRKMLAAVSRVLAGAAQKPASRVLVASRN) directs the protein to the mitochondrion. The residue at position 63 (Lys-63) is an N6-acetyllysine; alternate. Residue Lys-63 is modified to N6-succinyllysine; alternate. Residues His-92, Tyr-118, Arg-119, Ala-157, Gly-165, Val-167, Asp-196, Gly-197, Ala-198, Asn-225, and Tyr-227 each coordinate pyruvate. The thiamine diphosphate site is built by Tyr-118 and Arg-119. Thiamine diphosphate-binding residues include Gly-165, Val-167, Asp-196, Gly-197, Ala-198, and Asn-225. Asp-196 lines the Mg(2+) pocket. Mg(2+) contacts are provided by Asn-225 and Tyr-227. Phosphoserine; by PDK1 is present on Ser-232. Lys-244 is subject to N6-acetyllysine; alternate. Position 244 is an N6-succinyllysine; alternate (Lys-244). Lys-267 is modified (N6-acetyllysine). At Lys-277 the chain carries N6-succinyllysine. Position 292 (His-292) interacts with thiamine diphosphate. Ser-293 carries the phosphoserine; by PDK1, PDK2, PDK3 and PDK4 modification. Phosphoserine is present on Ser-295. A Phosphoserine; by PDK1, PDK2, PDK3 and PDK4 modification is found at Ser-300. Tyr-301 is modified (phosphotyrosine). Position 313 is an N6-acetyllysine; alternate (Lys-313). Lys-313 bears the N6-succinyllysine; alternate mark. N6-acetyllysine occurs at positions 321 and 336. The residue at position 385 (Lys-385) is an N6-succinyllysine.

Heterotetramer of two PDHA1 and two PDHB subunits. The heterotetramer interacts with DLAT, and is part of the multimeric pyruvate dehydrogenase complex that contains multiple copies of pyruvate dehydrogenase (E1), dihydrolipoamide acetyltransferase (DLAT, E2) and lipoamide dehydrogenase (DLD, E3). These subunits are bound to an inner core composed of about 48 DLAT and 12 PDHX molecules. The cofactor is thiamine diphosphate. Mg(2+) is required as a cofactor. Phosphorylation at Ser-232, Ser-293 and Ser-300 by PDK family kinases inactivates the enzyme; for this phosphorylation at a single site is sufficient. Phosphorylation at Ser-293 interferes with access to active site, and thereby inactivates the enzyme. Dephosphorylation at all three sites, i.e. at Ser-232, Ser-293 and Ser-300, is required for reactivation. Post-translationally, acetylation alters the phosphorylation pattern. Deacetylated by SIRT3. In terms of tissue distribution, in all tissues, but in very low amount in testis.

The protein localises to the mitochondrion matrix. The catalysed reaction is N(6)-[(R)-lipoyl]-L-lysyl-[protein] + pyruvate + H(+) = N(6)-[(R)-S(8)-acetyldihydrolipoyl]-L-lysyl-[protein] + CO2. With respect to regulation, pyruvate dehydrogenase activity is inhibited by phosphorylation of PDHA1; it is reactivated by dephosphorylation. Its function is as follows. The pyruvate dehydrogenase complex catalyzes the overall conversion of pyruvate to acetyl-CoA and CO(2), and thereby links the glycolytic pathway to the tricarboxylic cycle. In Rattus norvegicus (Rat), this protein is Pyruvate dehydrogenase E1 component subunit alpha, somatic form, mitochondrial (Pdha1).